A 653-amino-acid polypeptide reads, in one-letter code: MIHQNLAIMIIILPLVSSVINGLFLNRIDKKLAKIIAISFLLLSALFSLIIFCDATLVGKIIHIKLLPWIEFRNFKVNWSIYIDQLTSIMFIVVTFVSSVVHIYSLGYMANDKGIIRFLSFLSLFTFFMLMLVSADNFLQLFCGWEGVGVCSYLLIGFWYSKESANKAAMKAFITNRVSDFAFILGIITIIIYNGSANYKDVFLSAKLLSNTKILVHFSILDIICLLLSIGCIGKSAQIGLHVWLPDAMEGPTPVSALIHAATMVTAGIFLVARCSYLFEYSPIVLQFITIIGGITCLFAASIAIMQSDIKKIIAYSTCSQLGYMFMACGVSSYNSAIFHLVTHAFFKALLFLSAGSVIHSVNEHNIFKMGNLINKMPITYGNFLIGSLALIGIYPLSGFYSKDLILEAAYSSGSFMFIFGITAAMLTAIYSMKIIILVFHGKTKLEKDVFEHAHEPTKTMNNPLILLVAGSFFSGMLGYYLLSMNKPNGYFHESLFNLHIYKLLINHTPLYIKLLPMAVGIVGIVIGICLYKDSLPYHDALTNKSNKSKKDWIPQSNYKMILFIPNILRNKYYFDEIYNYLIIKPIHCLAYLFYLGDQKIIDRFGPNGFARVINYFCALTCKIQTGYIFNYALYIVSFIVITISYFVWKSIY.

17 helical membrane-spanning segments follow: residues 8 to 28, 35 to 55, 89 to 109, 115 to 135, 138 to 158, 178 to 198, 214 to 234, 253 to 273, 285 to 305, 313 to 333, 336 to 356, 377 to 397, 418 to 438, 465 to 485, 511 to 531, 577 to 597, and 629 to 649; these read IMIIILPLVSSVINGLFLNRI, IIAISFLLLSALFSLIIFCDA, IMFIVVTFVSSVVHIYSLGYM, IIRFLSFLSLFTFFMLMLVSA, FLQLFCGWEGVGVCSYLLIGF, VSDFAFILGIITIIIYNGSAN, ILVHFSILDIICLLLSIGCIG, TPVSALIHAATMVTAGIFLVA, VLQFITIIGGITCLFAASIAI, IIAYSTCSQLGYMFMACGVSS, SAIFHLVTHAFFKALLFLSAG, MPITYGNFLIGSLALIGIYPL, FIFGITAAMLTAIYSMKIIIL, LILLVAGSFFSGMLGYYLLSM, LYIKLLPMAVGIVGIVIGICL, EIYNYLIIKPIHCLAYLFYLG, and IFNYALYIVSFIVITISYFVW.

This sequence belongs to the complex I subunit 5 family.

Its subcellular location is the cell membrane. The catalysed reaction is a quinone + NADH + 5 H(+)(in) = a quinol + NAD(+) + 4 H(+)(out). Its function is as follows. NDH-1 shuttles electrons from NADH, via FMN and iron-sulfur (Fe-S) centers, to quinones in the respiratory chain. Couples the redox reaction to proton translocation (for every two electrons transferred, four hydrogen ions are translocated across the cytoplasmic membrane), and thus conserves the redox energy in a proton gradient. This chain is NADH-quinone oxidoreductase subunit L (nuoL), found in Rickettsia typhi (strain ATCC VR-144 / Wilmington).